The primary structure comprises 248 residues: Probable transcriptional regulatory protein Desal_2886 (248 aa).

The segment at 1-21 is disordered; the sequence is MAGHSKWANIQHRKGRQDAKR.

The protein belongs to the TACO1 family.

It localises to the cytoplasm. This is Probable transcriptional regulatory protein Desal_2886 from Maridesulfovibrio salexigens (strain ATCC 14822 / DSM 2638 / NCIMB 8403 / VKM B-1763) (Desulfovibrio salexigens).